Here is an 81-residue protein sequence, read N- to C-terminus: ATP synthase subunit c, chloroplastic (81 aa).

2 helical membrane passes run 3 to 23 and 57 to 77; these read PLIS…ASIG and LAFM…LLFA.

The protein belongs to the ATPase C chain family. In terms of assembly, F-type ATPases have 2 components, F(1) - the catalytic core - and F(0) - the membrane proton channel. F(1) has five subunits: alpha(3), beta(3), gamma(1), delta(1), epsilon(1). F(0) has four main subunits: a(1), b(1), b'(1) and c(10-14). The alpha and beta chains form an alternating ring which encloses part of the gamma chain. F(1) is attached to F(0) by a central stalk formed by the gamma and epsilon chains, while a peripheral stalk is formed by the delta, b and b' chains.

The protein resides in the plastid. It is found in the chloroplast thylakoid membrane. Functionally, f(1)F(0) ATP synthase produces ATP from ADP in the presence of a proton or sodium gradient. F-type ATPases consist of two structural domains, F(1) containing the extramembraneous catalytic core and F(0) containing the membrane proton channel, linked together by a central stalk and a peripheral stalk. During catalysis, ATP synthesis in the catalytic domain of F(1) is coupled via a rotary mechanism of the central stalk subunits to proton translocation. Its function is as follows. Key component of the F(0) channel; it plays a direct role in translocation across the membrane. A homomeric c-ring of between 10-14 subunits forms the central stalk rotor element with the F(1) delta and epsilon subunits. In Ceratophyllum demersum (Rigid hornwort), this protein is ATP synthase subunit c, chloroplastic.